We begin with the raw amino-acid sequence, 453 residues long: Glutamyl-tRNA(Gln) amidotransferase subunit A (453 aa).

Catalysis depends on charge relay system residues K56 and S131. S155 serves as the catalytic Acyl-ester intermediate.

It belongs to the amidase family. GatA subfamily. As to quaternary structure, heterotrimer of A, B and C subunits.

It catalyses the reaction L-glutamyl-tRNA(Gln) + L-glutamine + ATP + H2O = L-glutaminyl-tRNA(Gln) + L-glutamate + ADP + phosphate + H(+). In terms of biological role, allows the formation of correctly charged Gln-tRNA(Gln) through the transamidation of misacylated Glu-tRNA(Gln) in organisms which lack glutaminyl-tRNA synthetase. The reaction takes place in the presence of glutamine and ATP through an activated gamma-phospho-Glu-tRNA(Gln). The protein is Glutamyl-tRNA(Gln) amidotransferase subunit A of Campylobacter jejuni subsp. jejuni serotype O:6 (strain 81116 / NCTC 11828).